Consider the following 608-residue polypeptide: Protein Spindly (608 aa).

N-acetylmethionine is present on Met-1. A coiled-coil region spans residues 1–445; sequence MEADITNLRN…LKLKYEPEER (445 aa). The interval 465–487 is disordered; the sequence is PEETEETAAASATEDGVSRLPPH. Phosphoserine is present on residues Ser-516, Ser-518, and Ser-558.

This sequence belongs to the Spindly family. Interacts with KNTC1 and ZW10. These interactions appear weak and may be transient or indirect. Interacts with dynein intermediate chain and dynactin (DCTN1). Interacts with the catalytically active form of USP45. In terms of processing, monoubiquitinated with'Lys-48' linkage. Deubiquitinated by USP45.

It localises to the cytoplasm. The protein resides in the cytoskeleton. Its subcellular location is the microtubule organizing center. It is found in the centrosome. The protein localises to the chromosome. It localises to the centromere. The protein resides in the kinetochore. Its subcellular location is the nucleus. It is found in the spindle pole. Required for the localization of dynein and dynactin to the mitotic kintochore. Dynein is believed to control the initial lateral interaction between the kinetochore and spindle microtubules and to facilitate the subsequent formation of end-on kinetochore-microtubule attachments mediated by the NDC80 complex. Also required for correct spindle orientation. Does not appear to be required for the removal of spindle assembly checkpoint (SAC) proteins from the kinetochore upon bipolar spindle attachment. Acts as an adapter protein linking the dynein motor complex to various cargos and converts dynein from a non-processive to a highly processive motor in the presence of dynactin. Facilitates the interaction between dynein and dynactin and activates dynein processivity (the ability to move along a microtubule for a long distance without falling off the track). Plays a role in cell migration. This Mus musculus (Mouse) protein is Protein Spindly (Spdl1).